A 397-amino-acid polypeptide reads, in one-letter code: Acetate kinase (397 aa).

Asn8 serves as a coordination point for Mg(2+). Lys15 serves as a coordination point for ATP. Arg89 serves as a coordination point for substrate. Asp146 acts as the Proton donor/acceptor in catalysis. Residues 206–210, 281–283, and 329–333 contribute to the ATP site; these read HLGNG, DLR, and GVGEN. Position 382 (Glu382) interacts with Mg(2+).

Belongs to the acetokinase family. Homodimer. It depends on Mg(2+) as a cofactor. Requires Mn(2+) as cofactor.

Its subcellular location is the cytoplasm. The catalysed reaction is acetate + ATP = acetyl phosphate + ADP. Its pathway is metabolic intermediate biosynthesis; acetyl-CoA biosynthesis; acetyl-CoA from acetate: step 1/2. In terms of biological role, catalyzes the formation of acetyl phosphate from acetate and ATP. Can also catalyze the reverse reaction. This chain is Acetate kinase, found in Bacillus cereus (strain ATCC 14579 / DSM 31 / CCUG 7414 / JCM 2152 / NBRC 15305 / NCIMB 9373 / NCTC 2599 / NRRL B-3711).